A 484-amino-acid polypeptide reads, in one-letter code: Glutamate--tRNA ligase (484 aa).

The short motif at 12–22 (PSPTGEPHVGT) is the 'HIGH' region element. Positions 253–257 (KLSKR) match the 'KMSKS' region motif. K256 serves as a coordination point for ATP.

It belongs to the class-I aminoacyl-tRNA synthetase family. Glutamate--tRNA ligase type 1 subfamily. In terms of assembly, monomer.

The protein resides in the cytoplasm. It catalyses the reaction tRNA(Glu) + L-glutamate + ATP = L-glutamyl-tRNA(Glu) + AMP + diphosphate. In terms of biological role, catalyzes the attachment of glutamate to tRNA(Glu) in a two-step reaction: glutamate is first activated by ATP to form Glu-AMP and then transferred to the acceptor end of tRNA(Glu). The chain is Glutamate--tRNA ligase from Rhizobium etli (strain CIAT 652).